The primary structure comprises 449 residues: CBL-interacting protein kinase 31 (449 aa).

The region spanning 20–275 is the Protein kinase domain; it reads YELGRTIGEG…ISQILEDPWF (256 aa). ATP-binding positions include 26-34 and lysine 49; that span reads IGEGTFAKV. Aspartate 143 acts as the Proton acceptor in catalysis. The activation loop stretch occupies residues 161-190; the sequence is DFGLSALTEQVKADGLLHTTCGTPNYVAPE. Residues 313 to 337 enclose the NAF domain; sequence DQPTSMNAFELISLNQALNLDNLFE.

Belongs to the protein kinase superfamily. CAMK Ser/Thr protein kinase family. SNF1 subfamily. In terms of assembly, may interact with CBL3. Mn(2+) serves as cofactor. In terms of processing, autophosphorylated. As to expression, highly expressed in leaf blade and leaf sheath, but not in other tissues.

The enzyme catalyses L-seryl-[protein] + ATP = O-phospho-L-seryl-[protein] + ADP + H(+). The catalysed reaction is L-threonyl-[protein] + ATP = O-phospho-L-threonyl-[protein] + ADP + H(+). Its function is as follows. Involved in cold stress tolerance. CIPK serine-threonine protein kinases interact with CBL proteins. Binding of a CBL protein to the regulatory NAF domain of CIPK protein lead to the activation of the kinase in a calcium-dependent manner. The protein is CBL-interacting protein kinase 31 (CIPK31) of Oryza sativa subsp. japonica (Rice).